Consider the following 372-residue polypeptide: Chaperone protein DnaJ (372 aa).

A J domain is found at 5 to 70 (DYYEVLGVAK…DKRAAYDQFG (66 aa)). The segment at 133–211 (GTETKIRIPT…CHGEGRVKKH (79 aa)) adopts a CR-type zinc-finger fold. Residues C146, C149, C163, C166, C185, C188, C199, and C202 each coordinate Zn(2+). CXXCXGXG motif repeat units lie at residues 146-153 (CGTCHGSG), 163-170 (CSACGGHG), 185-192 (CPRCGGTG), and 199-206 (CPSCHGEG).

Belongs to the DnaJ family. Homodimer. The cofactor is Zn(2+).

The protein localises to the cytoplasm. Participates actively in the response to hyperosmotic and heat shock by preventing the aggregation of stress-denatured proteins and by disaggregating proteins, also in an autonomous, DnaK-independent fashion. Unfolded proteins bind initially to DnaJ; upon interaction with the DnaJ-bound protein, DnaK hydrolyzes its bound ATP, resulting in the formation of a stable complex. GrpE releases ADP from DnaK; ATP binding to DnaK triggers the release of the substrate protein, thus completing the reaction cycle. Several rounds of ATP-dependent interactions between DnaJ, DnaK and GrpE are required for fully efficient folding. Also involved, together with DnaK and GrpE, in the DNA replication of plasmids through activation of initiation proteins. In Thiobacillus denitrificans (strain ATCC 25259 / T1), this protein is Chaperone protein DnaJ.